A 101-amino-acid polypeptide reads, in one-letter code: NAD(P)H-quinone oxidoreductase subunit 4L, chloroplastic (101 aa).

3 consecutive transmembrane segments (helical) span residues 2 to 22 (MLEH…YGLI), 32 to 52 (MCLE…SGFF), and 61 to 81 (IFSV…LAIV).

Belongs to the complex I subunit 4L family. NDH is composed of at least 16 different subunits, 5 of which are encoded in the nucleus.

It localises to the plastid. The protein resides in the chloroplast thylakoid membrane. It catalyses the reaction a plastoquinone + NADH + (n+1) H(+)(in) = a plastoquinol + NAD(+) + n H(+)(out). It carries out the reaction a plastoquinone + NADPH + (n+1) H(+)(in) = a plastoquinol + NADP(+) + n H(+)(out). Functionally, NDH shuttles electrons from NAD(P)H:plastoquinone, via FMN and iron-sulfur (Fe-S) centers, to quinones in the photosynthetic chain and possibly in a chloroplast respiratory chain. The immediate electron acceptor for the enzyme in this species is believed to be plastoquinone. Couples the redox reaction to proton translocation, and thus conserves the redox energy in a proton gradient. In Jasminum nudiflorum (Winter jasmine), this protein is NAD(P)H-quinone oxidoreductase subunit 4L, chloroplastic.